Consider the following 351-residue polypeptide: Phenylalanine--tRNA ligase alpha subunit (351 aa).

Glu266 provides a ligand contact to Mg(2+).

This sequence belongs to the class-II aminoacyl-tRNA synthetase family. Phe-tRNA synthetase alpha subunit type 1 subfamily. In terms of assembly, tetramer of two alpha and two beta subunits. Mg(2+) serves as cofactor.

The protein localises to the cytoplasm. It carries out the reaction tRNA(Phe) + L-phenylalanine + ATP = L-phenylalanyl-tRNA(Phe) + AMP + diphosphate + H(+). The protein is Phenylalanine--tRNA ligase alpha subunit of Anaplasma marginale (strain St. Maries).